The chain runs to 108 residues: Small ribosomal subunit protein uS10 (108 aa).

The protein belongs to the universal ribosomal protein uS10 family. In terms of assembly, part of the 30S ribosomal subunit.

Its function is as follows. Involved in the binding of tRNA to the ribosomes. This chain is Small ribosomal subunit protein uS10, found in Rhodopirellula baltica (strain DSM 10527 / NCIMB 13988 / SH1).